The sequence spans 344 residues: GTPase Obg (344 aa).

An Obg domain is found at 1–159; that stretch reads MKFLDLCKVY…RTLWLRLKLI (159 aa). Positions 126–146 are disordered; it reads GNLHFKSSTNQAPRRSNPGQD. Over residues 130–144 the composition is skewed to polar residues; the sequence is FKSSTNQAPRRSNPG. An OBG-type G domain is found at 160–327; that stretch reads ADVGLLGLPN…VLRKLRGEIS (168 aa). Residues 166–173, 191–195, 212–215, 279–282, and 308–310 contribute to the GTP site; these read GLPNAGKS, FTTLH, DIPG, NKID, and SGV. Mg(2+) contacts are provided by Ser173 and Thr193.

Belongs to the TRAFAC class OBG-HflX-like GTPase superfamily. OBG GTPase family. Monomer. It depends on Mg(2+) as a cofactor.

It is found in the cytoplasm. Functionally, an essential GTPase which binds GTP, GDP and possibly (p)ppGpp with moderate affinity, with high nucleotide exchange rates and a fairly low GTP hydrolysis rate. Plays a role in control of the cell cycle, stress response, ribosome biogenesis and in those bacteria that undergo differentiation, in morphogenesis control. This Roseobacter denitrificans (strain ATCC 33942 / OCh 114) (Erythrobacter sp. (strain OCh 114)) protein is GTPase Obg.